We begin with the raw amino-acid sequence, 176 residues long: ATP-dependent protease subunit HslV (176 aa).

Threonine 2 is a catalytic residue. Residues glycine 157, cysteine 160, and threonine 163 each coordinate Na(+).

The protein belongs to the peptidase T1B family. HslV subfamily. As to quaternary structure, a double ring-shaped homohexamer of HslV is capped on each side by a ring-shaped HslU homohexamer. The assembly of the HslU/HslV complex is dependent on binding of ATP.

It localises to the cytoplasm. The enzyme catalyses ATP-dependent cleavage of peptide bonds with broad specificity.. Allosterically activated by HslU binding. Its function is as follows. Protease subunit of a proteasome-like degradation complex believed to be a general protein degrading machinery. This is ATP-dependent protease subunit HslV from Ectopseudomonas mendocina (strain ymp) (Pseudomonas mendocina).